The following is a 194-amino-acid chain: PRELI domain containing protein 3B (194 aa).

One can recognise a PRELI/MSF1 domain in the interval 1-172 (MKIWTSEHVF…VIHKLNAEIE (172 aa)). A phosphoserine mark is found at S46 and S51.

It belongs to the slowmo family.

The polypeptide is PRELI domain containing protein 3B (PRELID3B) (Homo sapiens (Human)).